Consider the following 377-residue polypeptide: Chaperone protein DnaJ (377 aa).

One can recognise a J domain in the interval 5-70 (DYYEILGVER…EKRAAYDQYG (66 aa)). The CR-type zinc finger occupies 134–212 (GITKDIQIQT…CHGDGRVHKT (79 aa)). 8 residues coordinate Zn(2+): Cys147, Cys150, Cys164, Cys167, Cys186, Cys189, Cys200, and Cys203. CXXCXGXG motif repeat units follow at residues 147-154 (CDHCNGSG), 164-171 (CPTCHGHG), 186-193 (CPHCHGTG), and 200-207 (CKKCHGDG).

The protein belongs to the DnaJ family. As to quaternary structure, homodimer. It depends on Zn(2+) as a cofactor.

It is found in the cytoplasm. Functionally, participates actively in the response to hyperosmotic and heat shock by preventing the aggregation of stress-denatured proteins and by disaggregating proteins, also in an autonomous, DnaK-independent fashion. Unfolded proteins bind initially to DnaJ; upon interaction with the DnaJ-bound protein, DnaK hydrolyzes its bound ATP, resulting in the formation of a stable complex. GrpE releases ADP from DnaK; ATP binding to DnaK triggers the release of the substrate protein, thus completing the reaction cycle. Several rounds of ATP-dependent interactions between DnaJ, DnaK and GrpE are required for fully efficient folding. Also involved, together with DnaK and GrpE, in the DNA replication of plasmids through activation of initiation proteins. The protein is Chaperone protein DnaJ of Actinobacillus succinogenes (strain ATCC 55618 / DSM 22257 / CCUG 43843 / 130Z).